The following is a 378-amino-acid chain: Chorismate synthase (378 aa).

Arg49 contacts NADP(+). Residues 126–128, Gly287, 302–306, and Arg328 contribute to the FMN site; these read RAS and KPTAT.

The protein belongs to the chorismate synthase family. Homotetramer. It depends on FMNH2 as a cofactor.

The catalysed reaction is 5-O-(1-carboxyvinyl)-3-phosphoshikimate = chorismate + phosphate. It functions in the pathway metabolic intermediate biosynthesis; chorismate biosynthesis; chorismate from D-erythrose 4-phosphate and phosphoenolpyruvate: step 7/7. Catalyzes the anti-1,4-elimination of the C-3 phosphate and the C-6 proR hydrogen from 5-enolpyruvylshikimate-3-phosphate (EPSP) to yield chorismate, which is the branch point compound that serves as the starting substrate for the three terminal pathways of aromatic amino acid biosynthesis. This reaction introduces a second double bond into the aromatic ring system. In Synechococcus sp. (strain JA-3-3Ab) (Cyanobacteria bacterium Yellowstone A-Prime), this protein is Chorismate synthase.